The chain runs to 241 residues: Capsid protein (241 aa).

Positions methionine 1–tyrosine 26 match the Bipartite nuclear localization signal motif. The tract at residues methionine 1–valine 30 is disordered.

Belongs to the geminiviridae capsid protein family. In terms of assembly, homomultimer. Interacts with the movement protein. Binds to single-stranded and double-stranded viral DNA.

Its subcellular location is the virion. The protein resides in the host nucleus. Encapsidates the viral genome into characteristic twinned ('geminate') particles. Binds the genomic viral ssDNA and shuttles it into and out of the cell nucleus. Plays a role in protection of the genome from degradation, virus acquisition and transmission by insect vectors, infectivity, and systemic movement. The CP of monopartite geminiviruses is absolutely essential for virus movement. The polypeptide is Capsid protein (Avena sativa (Oat)).